The following is a 71-amino-acid chain: Phosphatidylinositol N-acetylglucosaminyltransferase subunit Y (71 aa).

Topologically, residues 1 to 3 (MFL) are cytoplasmic. Residues 4–26 (SLPMLTVLIPLVSLAGLFYSASV) form a helical membrane-spanning segment. Topologically, residues 27-44 (EDDFPQGCTSTTSLCFYS) are lumenal. Residues 45 to 65 (LLLPITIPVYVFFHLWTWMGI) form a helical membrane-spanning segment. Residues 66-71 (KLFRHN) are Cytoplasmic-facing.

As to quaternary structure, component of the glycosylphosphatidylinositol-N-acetylglucosaminyltransferase (GPI-GnT) complex composed at least by PIGA, PIGC, PIGH, PIGP, PIGQ, PIGY and DPM2. Interacts directly with PIGA; this interaction regulates glycosylphosphatidylinositol-N-acetylglucosaminyltransferase activity. Does not interact with Ras proteins.

It localises to the endoplasmic reticulum membrane. The protein operates within glycolipid biosynthesis; glycosylphosphatidylinositol-anchor biosynthesis. Functionally, part of the glycosylphosphatidylinositol-N-acetylglucosaminyltransferase (GPI-GnT) complex that catalyzes the transfer of N-acetylglucosamine from UDP-N-acetylglucosamine to phosphatidylinositol and participates in the first step of GPI biosynthesis. May act by regulating the catalytic subunit PIGA. This is Phosphatidylinositol N-acetylglucosaminyltransferase subunit Y from Bos taurus (Bovine).